Reading from the N-terminus, the 279-residue chain is uncharacterized protein (279 aa).

This is an uncharacterized protein from Bacillus subtilis (strain 168).